The sequence spans 1582 residues: ATP-binding cassette sub-family C member 8 (1582 aa).

At 1 to 30 the chain is on the extracellular side; sequence MPLAFCGTENHSAAYRVDQGVLNNGCFVDA. Cys-6 and Cys-26 form a disulfide bridge. Asn-10 is a glycosylation site (N-linked (GlcNAc...) asparagine). A helical membrane pass occupies residues 31 to 47; sequence LNVVPHVFLLFITFPIL. Residues 48 to 72 lie on the Cytoplasmic side of the membrane; the sequence is FIGWGSQSSKVHIHHSTWLHFPGHN. The chain crosses the membrane as a helical span at residues 73–89; it reads LRWILTFILLFVLVCEI. The Extracellular segment spans residues 90–106; the sequence is AEGILSDGVTESRHLHL. A helical transmembrane segment spans residues 107–123; sequence YMPAGMAFMAAITSVVY. Topologically, residues 124–136 are cytoplasmic; sequence YHNIETSNFPKLL. The helical transmembrane segment at 137 to 153 threads the bilayer; that stretch reads IALLIYWTLAFITKTIK. The Extracellular portion of the chain corresponds to 154 to 169; it reads FVKFYDHAIGFSQLRF. The chain crosses the membrane as a helical span at residues 170–186; it reads CLTGLLVILYGMLLLVE. Over 187–303 the chain is Cytoplasmic; it reads VNVIRVRRYV…AFGRRLVLSS (117 aa). Residues 299–602 form the ABC transmembrane type-1 1 domain; that stretch reads LVLSSTFRIL…LSSVVRSTVK (304 aa). Residues 304–319 traverse the membrane as a helical segment; the sequence is TFRILADLLGFAGPLC. The Extracellular segment spans residues 320–356; the sequence is IFGIVDHLGKENHVFQPKTQFLGVYFVSSQEFLGNAY. The chain crosses the membrane as a helical span at residues 357–372; the sequence is VLAVLLFLALLLQRTF. At 373–438 the chain is on the cytoplasmic side; it reads LQASYYVAIE…MWFFFLCPNL (66 aa). A helical membrane pass occupies residues 439–454; it reads WAMPVQIIVGVILLYY. At 455 to 460 the chain is on the extracellular side; sequence ILGVSA. Residues 461–473 form a helical membrane-spanning segment; the sequence is LIGAAVIILLAPV. Residues 474 to 541 lie on the Cytoplasmic side of the membrane; the sequence is QYFVATKLSQ…SLRAFAVYTS (68 aa). A helical membrane pass occupies residues 542-557; that stretch reads ISIFMNTAIPIAAVLI. Residues 558–576 are Extracellular-facing; that stretch reads TFVGHVSFFKESDFSPSVA. The helical transmembrane segment at 577-592 threads the bilayer; that stretch reads FASLSLFHILVTPLFL. Residues 593 to 1013 lie on the Cytoplasmic side of the membrane; sequence LSSVVRSTVK…YLSSAGILLL (421 aa). Residues 679–930 enclose the ABC transporter 1 domain; it reads VQIIGGFFTW…ECQLFEHWKT (252 aa). 4 residues coordinate ATP: Trp-688, Gly-716, Ser-720, and Ser-721. Ser-720 contacts Mg(2+). A disordered region spans residues 741–768; sequence SSLPDSEGEDPSNPERETAADSDARSRG. Residues 753–766 are compositionally biased toward basic and acidic residues; it reads NPERETAADSDARS. Residue Gln-775 participates in Mg(2+) binding. A compositionally biased stretch (basic and acidic residues) spans 939-950; sequence LEKETVMERKAP. A disordered region spans residues 939–962; that stretch reads LEKETVMERKAPEPSQGLPRAMSS. An ABC transmembrane type-1 2 domain is found at 1013 to 1307; it reads LSLLVFSQLL…MVRNLADMEI (295 aa). Residues 1014-1031 traverse the membrane as a helical segment; that stretch reads SLLVFSQLLKHMVLVAID. Residues 1032–1067 lie on the Extracellular side of the membrane; that stretch reads YWLAKWTDSALVLSPAARNCSLSQECALDQSVYAMV. Asn-1050 carries N-linked (GlcNAc...) asparagine glycosylation. The helical transmembrane segment at 1068 to 1084 threads the bilayer; it reads FTVLCSLGIALCLVTSV. Over 1085-1143 the chain is Cytoplasmic; it reads TVEWTGLKVAKRLHRSLLNRIILAPMRFFETTPLGSILNRFSSDCNTIDQHIPSTLECL. A helical membrane pass occupies residues 1144–1161; the sequence is SRSTLLCVSALAVISYVT. A topological domain (extracellular) is located at residue Pro-1162. A helical membrane pass occupies residues 1163-1175; that stretch reads VFLVALLPLAVVC. Residues 1176–1249 lie on the Cytoplasmic side of the membrane; that stretch reads YFIQKYFRVA…FLTAANRWLE (74 aa). A helical membrane pass occupies residues 1250 to 1265; the sequence is VRMEYIGACVVLIAAA. Residues 1266 to 1281 lie on the Extracellular side of the membrane; sequence TSISNSLHRELSAGLV. A helical membrane pass occupies residues 1282-1297; the sequence is GLGLTYALMVSNYLNW. The Cytoplasmic segment spans residues 1298-1582; it reads MVRNLADMEI…VFASFVRADK (285 aa). Positions 1345-1579 constitute an ABC transporter 2 domain; the sequence is IQIQNLSVRY…KDSVFASFVR (235 aa). ADP is bound by residues Thr-1381, Gly-1382, Gly-1384, Lys-1385, Ser-1386, and Ser-1387. Ser-1483 is a binding site for ATP.

Belongs to the ABC transporter superfamily. ABCC family. Conjugate transporter (TC 3.A.1.208) subfamily. Forms an heterooctamer with KCNJ11; four ABCC8/SUR1 molecules interact with one KCNJ11 homotetramer.

The protein localises to the cell membrane. Its activity is regulated as follows. KATP channels are regulated by cytoplasmic ATP/ADP ratios; ATP inhibits the channel by closing the pore, while ADP activates the channel. Activated by phosphatidylinositol 4,5-biphosphate (PtdIns(4,5)P2). Regulator subunit of pancreatic ATP-sensitive potassium channel (KATP), playing a major role in the regulation of insulin release. In pancreatic cells, it forms KATP channels with KCNJ11; KCNJ11 forms the channel pore while ABCC8 is required for activation and regulation. This Rattus norvegicus (Rat) protein is ATP-binding cassette sub-family C member 8 (Abcc8).